We begin with the raw amino-acid sequence, 407 residues long: Resuscitation-promoting factor RpfA (407 aa).

Residues 1-33 (MSGRHRKPTTSNVSVAKIAFTGAVLGGGGIAMA) form the signal peptide. Disordered stretches follow at residues 142–253 (VNGE…ADLA) and 271–371 (LPAA…AETP). Positions 148–159 (PLAPPPADPAPP) are enriched in pro residues. Low complexity predominate over residues 160 to 170 (VELAANDLPAP). Residues 171-193 (LGEPLPAAPADPAPPADLAPPAP) show a composition bias toward pro residues. 2 repeat units span residues 178–185 (APADPAPP) and 186–193 (ADLAPPAP). The tract at residues 178 to 359 (APADPAPPAD…PDPQPADAPP (182 aa)) is 12 X 8 AA approximate repeats of A-P-A-D-L-A-P-P. Residues 194–210 (ADVAPPVELAVNDLPAP) show a composition bias toward low complexity. The span at 211-249 (LGEPLPAAPADPAPPADLAPPAPADLAPPAPADLAPPAP) shows a compositional bias: pro residues. Repeat copies occupy residues 218 to 225 (APADPAPP), 226 to 233 (ADLAPPAP), 240 to 247 (APADLAPP), 248 to 255 (APADLAPP), 274 to 281 (APAELAPP), 287 to 294 (ASADLAPP), 295 to 302 (APADLAPP), 303 to 310 (APAELAPP), 311 to 318 (APADLAPP), and 353 to 359 (QPADAPP). The segment covering 274-292 (APAELAPPADLAPASADLA) has biased composition (low complexity). Composition is skewed to pro residues over residues 293–312 (PPAP…PPAP) and 350–361 (PDPQPADAPPPG).

The protein belongs to the transglycosylase family. Rpf subfamily.

Its function is as follows. Factor that stimulates resuscitation of dormant cells. Has peptidoglycan (PG) hydrolytic activity. This chain is Resuscitation-promoting factor RpfA (rpfA), found in Mycobacterium tuberculosis (strain CDC 1551 / Oshkosh).